The following is a 342-amino-acid chain: Acetoin:2,6-dichlorophenolindophenol oxidoreductase subunit beta (342 aa).

As to quaternary structure, tetramer of 2 alpha and 2 beta subunits.

Its pathway is ketone degradation; acetoin degradation. Functionally, catalyzes the 2,6-dichlorophenolindophenol-dependent cleavage of acetoin into acetate and acetaldehyde. The chain is Acetoin:2,6-dichlorophenolindophenol oxidoreductase subunit beta (acoB) from Bacillus subtilis (strain 168).